The following is a 343-amino-acid chain: Transmembrane protein 120A (343 aa).

Residues 1–132 lie on the Cytoplasmic side of the membrane; sequence MHPPPPGPLG…KQAKFAYKDE (132 aa). Lysine 130 serves as a coordination point for CoA. A helical transmembrane segment spans residues 133–152; it reads YEKFKLYLTIILILISFTCR. Topologically, residues 153–158 are extracellular; the sequence is FLLNSR. Residues 159-177 form a helical membrane-spanning segment; sequence VTDAAFNFLLVWYYCTLTI. At 178 to 190 the chain is on the cytoplasmic side; it reads RESILINNGSRIK. Serine 187 and arginine 188 together coordinate CoA. A helical membrane pass occupies residues 191–209; that stretch reads GWWVFHHYVSTFLSGVMLT. Over 210 to 218 the chain is Extracellular; the sequence is WPDGLMYQK. A helical transmembrane segment spans residues 219–240; that stretch reads FRNQFLSFSMYQSFVQFLQYYY. Residues glutamine 237, tyrosine 240, glutamine 241, and histidine 283 each coordinate CoA. Residues 241–270 lie on the Cytoplasmic side of the membrane; sequence QSGCLYRLRALGERHTMDLTVEGFQSWMWR. A helical transmembrane segment spans residues 271–294; that stretch reads GLTFLLPFLFFGHFWQLFNALTLF. The Extracellular segment spans residues 295–304; it reads NLARDPECKE. Residues 305–330 form a helical membrane-spanning segment; the sequence is WQVLMCGFPFLLLFLGNFFTTLRVVH. Over 331-343 the chain is Cytoplasmic; sequence QKFHNQLHGSKKE. A CoA-binding site is contributed by lysine 332.

It belongs to the TMEM120 family. In terms of assembly, homodimer. Forms heterooligomer with TMEM120B. Interacts with PKD2; TMEM120A inhibits PKD2 channel activity through the physical association of PKD2 with TMEM120A.

It is found in the cell membrane. Its subcellular location is the nucleus inner membrane. The protein localises to the endoplasmic reticulum. Multifunctional protein involved in mechanosensation, and plays an essential role in lipid metabolism and adipocyte differentiation. May function as an ion channel involved in sensing mechanical stimuli. Mediates the mechanosensitivity of the PKD2-TMEM120A channel complex through direct physical interaction. TMEM120A seems to affect mechanosensation by inhibiting PIEZO2 channels, possibly by altering cellular lipid content. TMEM120A is structurally similar to a lipid-modifying enzyme, ELOVL7, and contains a bound coenzyme A molecule, which suggests it might function as an enzyme in lipid metabolism. Additionnaly, implicated in innate immune response against Zika virus. Acts as a key activator of the antiviral signaling involving STING1. This is Transmembrane protein 120A from Bos taurus (Bovine).